A 216-amino-acid polypeptide reads, in one-letter code: Large ribosomal subunit protein uL24m (216 aa).

Residues M1 to L9 constitute a mitochondrion transit peptide. Residue S24 is modified to Phosphoserine. The KOW domain maps to L56–E89.

This sequence belongs to the universal ribosomal protein uL24 family. Component of the mitochondrial ribosome large subunit (39S) which comprises a 16S rRNA and about 50 distinct proteins.

The protein localises to the mitochondrion. In Bos taurus (Bovine), this protein is Large ribosomal subunit protein uL24m (MRPL24).